The following is a 379-amino-acid chain: MLYWLLYEKAFLLHNFTPFRIFRYLTFRTAFASLTALFMGLIIGPAVVRRLREFQIGQYIREEGPKSHQKKSGTPTMGGVLITIAIIVPTLLWADLSNKFVWIAMLATIAFGAIGFTDDYLKVANRRNLGLTARAKMGLQILVAILVAISLVLVQRHGHYNTHLIVPFIKSFHPDLEISKLATYPHIWIIAYIPFLAFVAIVLVGSSNAVNLTDGLDGLAIGCTVIAAGALTVLTYVSGHAQFADYLGLSRMPEVGELSIFCGAMVGSAIGFLWYNAHPAEVFMGDVGSLALGGAIGTVAVIIKQELLLPFIGGVFVLEALSVILQVGSYKLRKKRIFKMAPLHHHFELLGWSESKIIVRFWIASLVFALFALTTLKLR.

Helical transmembrane passes span 27-47, 76-96, 100-120, 135-155, 185-205, 218-238, 255-275, 283-303, 307-327, and 356-376; these read FRTAFASLTALFMGLIIGPAV, TMGGVLITIAIIVPTLLWADL, FVWIAMLATIAFGAIGFTDDY, AKMGLQILVAILVAISLVLVQ, PHIWIIAYIPFLAFVAIVLVG, GLAIGCTVIAAGALTVLTYVS, VGELSIFCGAMVGSAIGFLWY, FMGDVGSLALGGAIGTVAVII, LLLPFIGGVFVLEALSVILQV, and KIIVRFWIASLVFALFALTTL.

The protein belongs to the glycosyltransferase 4 family. MraY subfamily. Mg(2+) is required as a cofactor.

The protein localises to the cell inner membrane. It catalyses the reaction UDP-N-acetyl-alpha-D-muramoyl-L-alanyl-gamma-D-glutamyl-meso-2,6-diaminopimeloyl-D-alanyl-D-alanine + di-trans,octa-cis-undecaprenyl phosphate = di-trans,octa-cis-undecaprenyl diphospho-N-acetyl-alpha-D-muramoyl-L-alanyl-D-glutamyl-meso-2,6-diaminopimeloyl-D-alanyl-D-alanine + UMP. It participates in cell wall biogenesis; peptidoglycan biosynthesis. Catalyzes the initial step of the lipid cycle reactions in the biosynthesis of the cell wall peptidoglycan: transfers peptidoglycan precursor phospho-MurNAc-pentapeptide from UDP-MurNAc-pentapeptide onto the lipid carrier undecaprenyl phosphate, yielding undecaprenyl-pyrophosphoryl-MurNAc-pentapeptide, known as lipid I. This is Phospho-N-acetylmuramoyl-pentapeptide-transferase from Koribacter versatilis (strain Ellin345).